A 257-amino-acid chain; its full sequence is 14-3-3-like protein GF14-G (257 aa).

Belongs to the 14-3-3 family.

Is associated with a DNA binding complex that binds to the G box, a well-characterized cis-acting DNA regulatory element found in plant genes. The sequence is that of 14-3-3-like protein GF14-G (GF14G) from Oryza sativa subsp. japonica (Rice).